The sequence spans 706 residues: Polyribonucleotide nucleotidyltransferase (706 aa).

The Mg(2+) site is built by Asp487 and Asp493. Positions 554 to 613 (PRIHTMKISSDKIKDVIGKGGAVIRALCEETGTTIEIEDDGTIKIAATEGAAAKEAIRRI) constitute a KH domain. The region spanning 623–691 (GRIYQGKVAR…RQGRVRLSMK (69 aa)) is the S1 motif domain.

Belongs to the polyribonucleotide nucleotidyltransferase family. In terms of assembly, component of the RNA degradosome, which is a multiprotein complex involved in RNA processing and mRNA degradation. Mg(2+) serves as cofactor.

The protein localises to the cytoplasm. It carries out the reaction RNA(n+1) + phosphate = RNA(n) + a ribonucleoside 5'-diphosphate. Functionally, involved in mRNA degradation. Catalyzes the phosphorolysis of single-stranded polyribonucleotides processively in the 3'- to 5'-direction. This chain is Polyribonucleotide nucleotidyltransferase, found in Vibrio atlanticus (strain LGP32) (Vibrio splendidus (strain Mel32)).